We begin with the raw amino-acid sequence, 187 residues long: MTATILVEKQKVDRPPLELHYLGDKVLRQPAKRIAKVDDSIRKLAKEMLQTMYSANGIGLAAPQVGINKQLLVVDCEQDKPDEPPLIMINPQITRTSEELCVVEEGCLSVPNVYMDVTRPRAIEVTYKDEHGRPQKRLFAELTARVIQHEMDHLNGVMFVDRVDNPLALAESLKKEGFSMQAVKPVA.

Fe cation-binding residues include C107 and H149. Residue E150 is part of the active site. H153 provides a ligand contact to Fe cation.

The protein belongs to the polypeptide deformylase family. The cofactor is Fe(2+).

The catalysed reaction is N-terminal N-formyl-L-methionyl-[peptide] + H2O = N-terminal L-methionyl-[peptide] + formate. Functionally, removes the formyl group from the N-terminal Met of newly synthesized proteins. Requires at least a dipeptide for an efficient rate of reaction. N-terminal L-methionine is a prerequisite for activity but the enzyme has broad specificity at other positions. This is Peptide deformylase from Synechocystis sp. (strain ATCC 27184 / PCC 6803 / Kazusa).